Here is a 483-residue protein sequence, read N- to C-terminus: Betaine aldehyde dehydrogenase (483 aa).

K(+) is bound by residues I27 and D93. An NAD(+)-binding site is contributed by 149–151; it reads GAW. The Charge relay system role is filled by K161. 175–178 contributes to the NAD(+) binding site; it reads KPSE. V179 contacts K(+). NAD(+) is bound at residue 228–231; that stretch reads SVPT. K(+) is bound at residue V243. E249 acts as the Proton acceptor in catalysis. NAD(+)-binding residues include G251, C283, and E380. Residue C283 is the Nucleophile of the active site. C283 is subject to Cysteine sulfenic acid (-SOH). K450 and G453 together coordinate K(+). Catalysis depends on E457, which acts as the Charge relay system.

It belongs to the aldehyde dehydrogenase family. Dimer of dimers. K(+) is required as a cofactor.

It catalyses the reaction betaine aldehyde + NAD(+) + H2O = glycine betaine + NADH + 2 H(+). The protein operates within amine and polyamine biosynthesis; betaine biosynthesis via choline pathway; betaine from betaine aldehyde: step 1/1. In terms of biological role, involved in the biosynthesis of the osmoprotectant glycine betaine. Catalyzes the irreversible oxidation of betaine aldehyde to the corresponding acid. The chain is Betaine aldehyde dehydrogenase from Cereibacter sphaeroides (strain KD131 / KCTC 12085) (Rhodobacter sphaeroides).